The primary structure comprises 116 residues: U16-barytoxin-Tl1f (116 aa).

Positions 1–20 are cleaved as a signal peptide; sequence MKTIIVFLSLLVLATKFGDA. Residues 21–74 constitute a propeptide that is removed on maturation; that stretch reads NEGVNQEQMKEVIQNEFREDFLNEMAAMSLLQQLEAIESTLLEKEADRNSRQKR. Intrachain disulfides connect Cys-75-Cys-90, Cys-82-Cys-95, and Cys-89-Cys-110. Asn-85 is a glycosylation site (N-linked (GlcNAc...) asparagine).

Belongs to the neurotoxin 14 (magi-1) family. 06 (ICK-Trit) subfamily. As to expression, expressed by the venom gland.

Its subcellular location is the secreted. Its function is as follows. Ion channel inhibitor. The protein is U16-barytoxin-Tl1f of Trittame loki (Brush-footed trapdoor spider).